The following is a 337-amino-acid chain: 5-formaminoimidazole-4-carboxamide-1-(beta)-D-ribofuranosyl 5'-monophosphate synthetase (337 aa).

The 5-amino-1-(5-phospho-beta-D-ribosyl)imidazole-4-carboxamide site is built by H23 and S87. Residues 121–328 enclose the ATP-grasp domain; it reads MRLLEYAGIP…IAHEIVNAVK (208 aa). Residues 144-191 and E213 each bind ATP; that span reads PVIV…VPAY. N233 lines the 5-amino-1-(5-phospho-beta-D-ribosyl)imidazole-4-carboxamide pocket. Mg(2+) is bound by residues E272 and E285.

The protein belongs to the phosphohexose mutase family. Requires Mg(2+) as cofactor. Mn(2+) serves as cofactor.

The catalysed reaction is 5-amino-1-(5-phospho-beta-D-ribosyl)imidazole-4-carboxamide + formate + ATP = 5-formamido-1-(5-phospho-D-ribosyl)imidazole-4-carboxamide + ADP + phosphate. It participates in purine metabolism; IMP biosynthesis via de novo pathway; 5-formamido-1-(5-phospho-D-ribosyl)imidazole-4-carboxamide from 5-amino-1-(5-phospho-D-ribosyl)imidazole-4-carboxamide (formate route): step 1/1. Its function is as follows. Catalyzes the ATP- and formate-dependent formylation of 5-aminoimidazole-4-carboxamide-1-beta-d-ribofuranosyl 5'-monophosphate (AICAR) to 5-formaminoimidazole-4-carboxamide-1-beta-d-ribofuranosyl 5'-monophosphate (FAICAR) in the absence of folates. The polypeptide is 5-formaminoimidazole-4-carboxamide-1-(beta)-D-ribofuranosyl 5'-monophosphate synthetase (Caldivirga maquilingensis (strain ATCC 700844 / DSM 13496 / JCM 10307 / IC-167)).